The sequence spans 481 residues: tRNA pseudouridine(38/39) synthase (481 aa).

Ala-2 carries the N-acetylalanine modification. Over residues 29–41 the composition is skewed to basic and acidic residues; it reads KKEQAKNKEDSNI. The disordered stretch occupies residues 29-50; that stretch reads KKEQAKNKEDSNIRENSAGAGK. Asp-118 serves as the catalytic Nucleophile. Tyr-195 contributes to the substrate binding site. Residues Thr-456, Thr-466, and Thr-468 each carry the phosphothreonine modification.

Belongs to the tRNA pseudouridine synthase TruA family.

The protein localises to the nucleus. It carries out the reaction uridine(38/39) in tRNA = pseudouridine(38/39) in tRNA. In terms of biological role, formation of pseudouridine at position 39 in the anticodon stem and loop of transfer RNAs. This Homo sapiens (Human) protein is tRNA pseudouridine(38/39) synthase (PUS3).